A 461-amino-acid polypeptide reads, in one-letter code: Argininosuccinate lyase (461 aa).

Belongs to the lyase 1 family. Argininosuccinate lyase subfamily. In terms of assembly, homotetramer.

The protein resides in the cytoplasm. It carries out the reaction 2-(N(omega)-L-arginino)succinate = fumarate + L-arginine. It participates in amino-acid biosynthesis; L-arginine biosynthesis; L-arginine from L-ornithine and carbamoyl phosphate: step 3/3. The sequence is that of Argininosuccinate lyase from Nostoc punctiforme (strain ATCC 29133 / PCC 73102).